The chain runs to 930 residues: Carnosine synthase 1 (930 aa).

Residues 1–24 are disordered; it reads MISVDRLSEEQALGMKEQEWAGPE. An ATP-grasp domain is found at 624–825; sequence RPPPAAFSVP…LLLAAVLLAL (202 aa). ATP is bound at residue 650–716; sequence VPFPAVAKLE…MEYVPGTEHD (67 aa). Mg(2+) contacts are provided by glutamate 782, glutamate 794, and asparagine 796. Mn(2+) is bound by residues glutamate 782, glutamate 794, and asparagine 796.

Homotetramer. Requires Mg(2+) as cofactor. The cofactor is Mn(2+).

The enzyme catalyses beta-alanine + L-histidine + ATP = carnosine + ADP + phosphate + H(+). It catalyses the reaction 4-aminobutanoate + L-histidine + ATP = L-homocarnosine + ADP + phosphate + H(+). In terms of biological role, catalyzes the synthesis of carnosine and homocarnosine. Carnosine is synthesized more efficiently than homocarnosine. The polypeptide is Carnosine synthase 1 (Gallus gallus (Chicken)).